We begin with the raw amino-acid sequence, 376 residues long: Dihydroorotate dehydrogenase (quinone) (376 aa).

FMN contacts are provided by residues 74–78 and T98; that span reads AGFDK. K78 is a substrate binding site. Position 123 to 127 (123 to 127) interacts with substrate; that stretch reads NRMGF. FMN is bound by residues N155 and N188. Position 188 (N188) interacts with substrate. The active-site Nucleophile is the S191. N193 provides a ligand contact to substrate. Residues K226 and T254 each contribute to the FMN site. Residue 255 to 256 coordinates substrate; sequence NT. FMN-binding positions include G284, G313, and 334–335; that span reads YT.

It belongs to the dihydroorotate dehydrogenase family. Type 2 subfamily. As to quaternary structure, monomer. Requires FMN as cofactor.

The protein localises to the cell membrane. It catalyses the reaction (S)-dihydroorotate + a quinone = orotate + a quinol. It participates in pyrimidine metabolism; UMP biosynthesis via de novo pathway; orotate from (S)-dihydroorotate (quinone route): step 1/1. Catalyzes the conversion of dihydroorotate to orotate with quinone as electron acceptor. The sequence is that of Dihydroorotate dehydrogenase (quinone) from Nostoc punctiforme (strain ATCC 29133 / PCC 73102).